A 560-amino-acid chain; its full sequence is Portal protein (560 aa).

The segment at 526–560 (KVQADETGNYSGSDVSPLKFKPETLPFSGSTDDSI) is disordered.

Belongs to the Tevenvirinae portal protein family. Homododecamer. Interacts with the large terminase subunit. Interacts with the major capsid protein. Interacts with the capsid vertex protein.

The protein resides in the virion. Forms the portal vertex of the capsid. This portal plays critical roles in head assembly, genome packaging, neck/tail attachment, and genome ejection. The portal protein multimerizes as a single ring-shaped homododecamer arranged around a central channel. Binds to the terminase subunits to form the packaging machine. This Salmonella typhi protein is Portal protein.